The following is a 101-amino-acid chain: uncharacterized protein (101 aa).

The first 19 residues, 1–19 (MKFKYLSTPLLFSALLFSA), serve as a signal peptide directing secretion. Cys20 is lipidated: N-palmitoyl cysteine. The S-diacylglycerol cysteine moiety is linked to residue Cys20.

It belongs to the MG439/MG440 family.

The protein localises to the cell membrane. This is an uncharacterized protein from Mycoplasma pneumoniae (strain ATCC 29342 / M129 / Subtype 1) (Mycoplasmoides pneumoniae).